Consider the following 160-residue polypeptide: Putative UPF0479 protein YIL177W-A (160 aa).

Transmembrane regions (helical) follow at residues 39–59 (IVFC…KVLQ) and 136–156 (VPMI…ISQH).

This sequence belongs to the UPF0479 family.

It localises to the membrane. In Saccharomyces cerevisiae (strain ATCC 204508 / S288c) (Baker's yeast), this protein is Putative UPF0479 protein YIL177W-A.